Here is a 24-residue protein sequence, read N- to C-terminus: Ranatuerin-4 (24 aa).

Residues C18 and C24 are joined by a disulfide bond.

Belongs to the frog skin active peptide (FSAP) family. Ranatuerin subfamily. In terms of tissue distribution, expressed by the skin glands.

The protein resides in the secreted. Antibacterial activity against Gram-positive bacterium S.aureus (MIC=55 uM). Shows no detectable hemolytic activity towards human erythrocytes. This is Ranatuerin-4 from Aquarana catesbeiana (American bullfrog).